Here is a 367-residue protein sequence, read N- to C-terminus: Putative F-box/kelch-repeat protein At4g39600 (367 aa).

One can recognise an F-box domain in the interval 11 to 57; that stretch reads ATSNPSLPEDLVVSCLARVSRLYYPTLSLVSKSFRSLIASPDLYKTR. Kelch repeat units follow at residues 127–171 and 172–216; these read HLYA…LDGK and MYLA…EGKI.

This chain is Putative F-box/kelch-repeat protein At4g39600, found in Arabidopsis thaliana (Mouse-ear cress).